The following is a 466-amino-acid chain: Probable Xaa-Pro aminopeptidase pepP (466 aa).

Positions 264, 275, 398, and 438 each coordinate Mn(2+).

The protein belongs to the peptidase M24B family. Mn(2+) serves as cofactor.

The catalysed reaction is Release of any N-terminal amino acid, including proline, that is linked to proline, even from a dipeptide or tripeptide.. Its function is as follows. Catalyzes the removal of a penultimate prolyl residue from the N-termini of peptides. The polypeptide is Probable Xaa-Pro aminopeptidase pepP (pepP) (Aspergillus niger (strain ATCC MYA-4892 / CBS 513.88 / FGSC A1513)).